The primary structure comprises 311 residues: Cathepsin B (311 aa).

Residues 1–19 (MRVLLSLVVILFIINSAFA) form the signal peptide. A propeptide spanning residues 20–78 (VKINIGRPTKSHKTIHHETWVEEQTDQFDNIKVGQLLGFKRSPNRPKLQIKSYDPLGVQ) is cleaved from the precursor. A glycan (N-linked (GlcNAc...) asparagine) is linked at N91. 5 disulfide bridges follow: C92–C121, C104–C145, C138–C191, C167–C195, and C175–C182. The active site involves C107. N-linked (GlcNAc...) asparagine glycosylation occurs at N198. Active-site residues include H261 and N281. N-linked (GlcNAc...) asparagine glycosylation is present at N290.

Belongs to the peptidase C1 family.

It is found in the lysosome. The enzyme catalyses Hydrolysis of proteins with broad specificity for peptide bonds. Preferentially cleaves -Arg-Arg-|-Xaa bonds in small molecule substrates (thus differing from cathepsin L). In addition to being an endopeptidase, shows peptidyl-dipeptidase activity, liberating C-terminal dipeptides.. Functionally, thiol protease which is believed to participate in intracellular degradation and turnover of proteins. This is Cathepsin B (ctsB) from Dictyostelium discoideum (Social amoeba).